The chain runs to 296 residues: Light-independent protochlorophyllide reductase iron-sulfur ATP-binding protein (296 aa).

Residues 1–20 (MTTTLSRPTDGEGSVQVQQD) form a disordered region. ATP is bound by residues 39 to 44 (GIGKST) and Lys-68. Ser-43 is a Mg(2+) binding site. Residues Cys-124 and Cys-158 each contribute to the [4Fe-4S] cluster site. Residue 209 to 210 (NR) coordinates ATP.

The protein belongs to the NifH/BchL/ChlL family. In terms of assembly, homodimer. Protochlorophyllide reductase is composed of three subunits; ChlL, ChlN and ChlB. It depends on [4Fe-4S] cluster as a cofactor.

It catalyses the reaction chlorophyllide a + oxidized 2[4Fe-4S]-[ferredoxin] + 2 ADP + 2 phosphate = protochlorophyllide a + reduced 2[4Fe-4S]-[ferredoxin] + 2 ATP + 2 H2O. The protein operates within porphyrin-containing compound metabolism; chlorophyll biosynthesis (light-independent). Component of the dark-operative protochlorophyllide reductase (DPOR) that uses Mg-ATP and reduced ferredoxin to reduce ring D of protochlorophyllide (Pchlide) to form chlorophyllide a (Chlide). This reaction is light-independent. The L component serves as a unique electron donor to the NB-component of the complex, and binds Mg-ATP. In Synechococcus sp. (strain CC9902), this protein is Light-independent protochlorophyllide reductase iron-sulfur ATP-binding protein.